The sequence spans 202 residues: Superoxide dismutase [Mn] (202 aa).

Mn(2+) contacts are provided by His27, His82, Asp164, and His168.

It belongs to the iron/manganese superoxide dismutase family. Homodimer. The cofactor is Mn(2+).

The catalysed reaction is 2 superoxide + 2 H(+) = H2O2 + O2. Destroys superoxide anion radicals which are normally produced within the cells and which are toxic to biological systems. The sequence is that of Superoxide dismutase [Mn] (sodA) from Listeria monocytogenes serovar 1/2a (strain ATCC BAA-679 / EGD-e).